We begin with the raw amino-acid sequence, 233 residues long: Lipoprotein-releasing system ATP-binding protein LolD (233 aa).

An ABC transporter domain is found at Y10–P233. G46–S53 contacts ATP.

The protein belongs to the ABC transporter superfamily. Lipoprotein translocase (TC 3.A.1.125) family. The complex is composed of two ATP-binding proteins (LolD) and two transmembrane proteins (LolC and LolE).

Its subcellular location is the cell inner membrane. In terms of biological role, part of the ABC transporter complex LolCDE involved in the translocation of mature outer membrane-directed lipoproteins, from the inner membrane to the periplasmic chaperone, LolA. Responsible for the formation of the LolA-lipoprotein complex in an ATP-dependent manner. The chain is Lipoprotein-releasing system ATP-binding protein LolD from Nitratidesulfovibrio vulgaris (strain ATCC 29579 / DSM 644 / CCUG 34227 / NCIMB 8303 / VKM B-1760 / Hildenborough) (Desulfovibrio vulgaris).